The primary structure comprises 74 residues: High-potential iron-sulfur protein (74 aa).

[4Fe-4S] cluster is bound by residues cysteine 36, cysteine 39, cysteine 53, and cysteine 67.

It belongs to the high-potential iron-sulfur protein (HiPIP) family. Homodimer.

Specific class of high-redox-potential 4Fe-4S ferredoxins. Functions in anaerobic electron transport in most purple and in some other photosynthetic bacteria and in at least one genus (Paracoccus) of halophilic, denitrifying bacteria. The polypeptide is High-potential iron-sulfur protein (hip) (Rubrivivax gelatinosus (Rhodocyclus gelatinosus)).